Here is a 343-residue protein sequence, read N- to C-terminus: N-acetyl-gamma-glutamyl-phosphate reductase (343 aa).

The active site involves Cys146.

This sequence belongs to the NAGSA dehydrogenase family. Type 1 subfamily.

It is found in the cytoplasm. The enzyme catalyses N-acetyl-L-glutamate 5-semialdehyde + phosphate + NADP(+) = N-acetyl-L-glutamyl 5-phosphate + NADPH + H(+). Its pathway is amino-acid biosynthesis; L-arginine biosynthesis; N(2)-acetyl-L-ornithine from L-glutamate: step 3/4. Catalyzes the NADPH-dependent reduction of N-acetyl-5-glutamyl phosphate to yield N-acetyl-L-glutamate 5-semialdehyde. The sequence is that of N-acetyl-gamma-glutamyl-phosphate reductase from Arthrobacter sp. (strain FB24).